The following is a 148-amino-acid chain: Transcriptional regulator MraZ (148 aa).

2 SpoVT-AbrB domains span residues 5 to 51 (ATSL…PLPA) and 80 to 123 (AEDV…SMEA).

The protein belongs to the MraZ family. Forms oligomers.

The protein resides in the cytoplasm. It localises to the nucleoid. The chain is Transcriptional regulator MraZ from Methylobacillus flagellatus (strain ATCC 51484 / DSM 6875 / VKM B-1610 / KT).